The chain runs to 231 residues: Transcriptional regulatory protein KdpE (231 aa).

The Response regulatory domain maps to 4–117 (KILIIEDDHA…ELRARIRVIE (114 aa)). 4-aspartylphosphate is present on D53. The segment at residues 127-227 (NIVFTNGLLS…HPRIGYQMLQ (101 aa)) is a DNA-binding region (ompR/PhoB-type).

In terms of processing, phosphorylated by KdpD. Phosphorylation is required for transcriptional activity.

Functionally, member of the two-component regulatory system KdpD/KdpE that regulates the transcription of a series of virulence factors through sensing external K(+) concentrations. Also regulates capsular polysaccharide synthesis. Upon phosphorylation by KpdD, functions as a transcriptional regulator by direct binding to promoter regions of target genes including spa, hla, aur and geh. Represses the transcription of kdpFABC operon. In Staphylococcus aureus (strain NCTC 8325 / PS 47), this protein is Transcriptional regulatory protein KdpE.